Reading from the N-terminus, the 1032-residue chain is Exportin-T (1032 aa).

Belongs to the exportin family.

It is found in the nucleus. The protein resides in the cytoplasm. Its function is as follows. tRNA nucleus export receptor which facilitates tRNA translocation across the nuclear pore complex. Involved in pre-tRNA splicing, probably by affecting the interaction of pre-tRNA with splicing endonuclease. The chain is Exportin-T (los1) from Aspergillus fumigatus (strain ATCC MYA-4609 / CBS 101355 / FGSC A1100 / Af293) (Neosartorya fumigata).